We begin with the raw amino-acid sequence, 256 residues long: Fructose-1,6-bisphosphatase/inositol-1-monophosphatase (256 aa).

Mg(2+) contacts are provided by glutamate 65, aspartate 79, isoleucine 81, and aspartate 82. Residues 82-84 (DGT), arginine 172, alanine 177, and arginine 196 each bind substrate. Aspartate 201 contacts Mg(2+).

The protein belongs to the inositol monophosphatase superfamily. FBPase class 4 family. As to quaternary structure, homotetramer. Requires Mg(2+) as cofactor.

The catalysed reaction is beta-D-fructose 1,6-bisphosphate + H2O = beta-D-fructose 6-phosphate + phosphate. It catalyses the reaction a myo-inositol phosphate + H2O = myo-inositol + phosphate. In contrast to mammalian I-1-P phosphatases, is only weakly inhibited by Li(+), since 50% inhibitory concentration for Li(+) is about 100 mM, and the Li(+) concentration required to totally abolish I-1-Pase activity is 1 M. Its function is as follows. Phosphatase with broad specificity; it can dephosphorylate fructose 1,6-bisphosphate, both D and L isomers of inositol-1-phosphate (I-1-P) but displaying a 20-fold higher rate of hydrolysis of D-I-1-P than of the L isomer, 2'-AMP, pNPP, inositol-2-phosphate, beta-glycerol phosphate, and alpha-D-glucose-1-phosphate. Cannot hydrolyze glucose-6-phosphate, fructose-6-phosphate, 5'-AMP and NAD(+). May be involved in the biosynthesis of a unique osmolyte, di-myo-inositol 1,1-phosphate. The chain is Fructose-1,6-bisphosphatase/inositol-1-monophosphatase (suhB) from Thermotoga maritima (strain ATCC 43589 / DSM 3109 / JCM 10099 / NBRC 100826 / MSB8).